The following is a 188-amino-acid chain: Archaemetzincin (188 aa).

Residue His137 participates in Zn(2+) binding. Glu138 (proton acceptor) is an active-site residue. Residues His141, His147, Cys148, Cys153, Cys172, and Cys175 each coordinate Zn(2+).

The protein belongs to the peptidase M54 family. As to quaternary structure, monomer. It depends on Zn(2+) as a cofactor.

Its function is as follows. Probable zinc metalloprotease whose natural substrate is unknown. This Pyrococcus horikoshii (strain ATCC 700860 / DSM 12428 / JCM 9974 / NBRC 100139 / OT-3) protein is Archaemetzincin.